Here is a 595-residue protein sequence, read N- to C-terminus: Glutamyl-tRNA(Gln) amidotransferase subunit B, mitochondrial (595 aa).

The transit peptide at 1–72 directs the protein to the mitochondrion; the sequence is MPRLWYSRYL…RAKSQSRNGR (72 aa).

The protein belongs to the GatB/GatE family. GatB subfamily. As to quaternary structure, subunit of the heterotrimeric GatCAB amidotransferase (AdT) complex, composed of A, B and C subunits.

Its subcellular location is the mitochondrion. It catalyses the reaction L-glutamyl-tRNA(Gln) + L-glutamine + ATP + H2O = L-glutaminyl-tRNA(Gln) + L-glutamate + ADP + phosphate + H(+). Functionally, allows the formation of correctly charged Gln-tRNA(Gln) through the transamidation of misacylated Glu-tRNA(Gln) in the mitochondria. The reaction takes place in the presence of glutamine and ATP through an activated gamma-phospho-Glu-tRNA(Gln). This Talaromyces marneffei (strain ATCC 18224 / CBS 334.59 / QM 7333) (Penicillium marneffei) protein is Glutamyl-tRNA(Gln) amidotransferase subunit B, mitochondrial.